The chain runs to 121 residues: Iron-sulfur cluster assembly protein CyaY (121 aa).

It belongs to the frataxin family.

In terms of biological role, involved in iron-sulfur (Fe-S) cluster assembly. May act as a regulator of Fe-S biogenesis. The chain is Iron-sulfur cluster assembly protein CyaY from Buchnera aphidicola subsp. Schizaphis graminum (strain Sg).